The primary structure comprises 380 residues: MASGTTASEEERSLRECELYVQKHNIQALLKDSIVQLCTARPERPMAFLREYFEKLEKEEAKQIQNLQKAGSRADSREDEISPPPPNPVVKGRRRRGAISAEVYTEEDAASYVRKVIPKDYKTMAALAKAIEKNVLFSHLDDNERSDIFDAMFPVSFIAGETVIQQGDEGDNFYVIDQGEMDVYVNNEWATSVGEGGSFGELALIYGTPRAATVKAKTNVKLWGIDRDSYRRILMGSTLRKRKMYEEFLSKVSILESLDKWERLTVADALEPVQFEDGQKIVVQGEPGDEFFIILEGSAAVLQRRSENEEFVEVGRLGPSDYFGEIALLMNRPRAATVVARGPLKCVKLDRPRFERVLGPCSDILKRNIQQYNSFVSLSV.

Methionine 1 carries the N-acetylmethionine modification. At alanine 2 the chain carries N-acetylalanine; in cAMP-dependent protein kinase type I-alpha regulatory subunit, N-terminally processed. A dimerization and phosphorylation region spans residues 2–135 (ASGTTASEEE…ALAKAIEKNV (134 aa)). Residues serine 3, serine 76, and serine 82 each carry the phosphoserine modification. Residues 64-96 (IQNLQKAGSRADSREDEISPPPPNPVVKGRRRR) are disordered. The Pseudophosphorylation motif motif lies at 95-99 (RRGAI). A Phosphoserine modification is found at serine 100. 3',5'-cyclic AMP is bound by residues 136 to 253 (LFSH…SKVS), glutamate 201, arginine 210, 254 to 380 (ILES…SLSV), glutamate 325, and arginine 334. Position 257 is a phosphoserine (serine 257).

It belongs to the cAMP-dependent kinase regulatory chain family. The inactive holoenzyme is composed of two regulatory chains and two catalytic chains. Activation by cAMP releases the two active catalytic monomers and the regulatory dimer. Interacts with PRKACA and PRKACB. PRKAR1A also interacts with RFC2; the complex may be involved in cell survival. Interacts with AKAP4. Interacts with RARA; the interaction occurs in the presence of cAMP or FSH and regulates RARA transcriptional activity. Interacts with the phosphorylated form of PJA2. Interacts with CBFA2T3. Interacts with PRKX; regulates this cAMP-dependent protein kinase. Interacts with smAKAP; this interaction may target PRKAR1A to the plasma membrane. Interacts with AICDA. The pseudophosphorylation site binds to the substrate-binding region of the catalytic chain, resulting in the inhibition of its activity. The physiological significance of the in vitro phosphorylation of a proximal serine is unclear. Four types of regulatory chains are found: I-alpha, I-beta, II-alpha, and II-beta. Their expression varies among tissues and is in some cases constitutive and in others inducible.

The protein resides in the cell membrane. In terms of biological role, regulatory subunit of the cAMP-dependent protein kinases involved in cAMP signaling in cells. This chain is cAMP-dependent protein kinase type I-alpha regulatory subunit (PRKAR1A), found in Bos taurus (Bovine).